We begin with the raw amino-acid sequence, 355 residues long: MKKHNFYAGPSILSEYTIKNTAAAVENFAGMGLSLLEISHRSKEFVAVNDEARALIKELLDVPAGYEVVFMGGGASMQFCMVPYNLLNKKASYLDTGTWASNAIKEAKLFGEVDVVASSKDKNYTYIPKGYAIADDSDYFHFTSNNTIYGTEMRKDPDVKQRLVCDMSSDIFSRPIDISKYDIIYAGAQKNLAPAGVTLAIVRVDALGHVDRPIPTMLNYATHIKKDSMFNTPPVLPIYAALQTLKWYKEQGGIAAMEKKDLENAAILYDEIDRNKLFRGTVAEEDRSIMNVCFVMNDEYKELEDEFSKYATAAGMVGIKGHRSVGGFRASLYNAMPKSSVEALVACMKEFEKQH.

L-glutamate is bound at residue arginine 41. Pyridoxal 5'-phosphate-binding positions include 75 to 76 (AS), tryptophan 99, threonine 147, aspartate 166, and glutamine 189. Lysine 190 is modified (N6-(pyridoxal phosphate)lysine). Position 231–232 (231–232 (NT)) interacts with pyridoxal 5'-phosphate.

It belongs to the class-V pyridoxal-phosphate-dependent aminotransferase family. SerC subfamily. As to quaternary structure, homodimer. Requires pyridoxal 5'-phosphate as cofactor.

It localises to the cytoplasm. It carries out the reaction O-phospho-L-serine + 2-oxoglutarate = 3-phosphooxypyruvate + L-glutamate. It catalyses the reaction 4-(phosphooxy)-L-threonine + 2-oxoglutarate = (R)-3-hydroxy-2-oxo-4-phosphooxybutanoate + L-glutamate. Its pathway is amino-acid biosynthesis; L-serine biosynthesis; L-serine from 3-phospho-D-glycerate: step 2/3. It participates in cofactor biosynthesis; pyridoxine 5'-phosphate biosynthesis; pyridoxine 5'-phosphate from D-erythrose 4-phosphate: step 3/5. Its function is as follows. Catalyzes the reversible conversion of 3-phosphohydroxypyruvate to phosphoserine and of 3-hydroxy-2-oxo-4-phosphonooxybutanoate to phosphohydroxythreonine. In Parabacteroides distasonis (strain ATCC 8503 / DSM 20701 / CIP 104284 / JCM 5825 / NCTC 11152), this protein is Phosphoserine aminotransferase.